A 355-amino-acid polypeptide reads, in one-letter code: Guanine nucleotide-binding protein G(i) subunit alpha-2 (355 aa).

The N-myristoyl glycine moiety is linked to residue G2. Residue C3 is the site of S-palmitoyl cysteine attachment. Residues 32–355 (REVKLLLLGA…KNNLKDCGLF (324 aa)) enclose the G-alpha domain. The G1 motif stretch occupies residues 35-48 (KLLLLGAGESGKST). GTP-binding positions include 40–47 (GAGESGKS), 176–182 (LRTRVKT), 201–205 (DVGGQ), 270–273 (NKKD), and A327. Mg(2+) is bound by residues S47 and T182. The segment at 174–182 (DVLRTRVKT) is G2 motif. The interval 197-206 (FKMFDVGGQR) is G3 motif. Positions 266–273 (ILFLNKKD) are G4 motif. The interval 325–330 (TCATDT) is G5 motif.

The protein belongs to the G-alpha family. G(i/o/t/z) subfamily. As to quaternary structure, g proteins are composed of 3 units; alpha, beta and gamma. The alpha chain contains the guanine nucleotide binding site. In this context, interacts with GNB2. Interacts with UNC5B. Interacts with GPSM1. Interacts with RGS12 and RGS14. Interacts (inactive GDP-bound form) with NUCB1 (via GBA motif); the interaction leads to activation of GNAI3. Interacts (inactive GDP-bound form) with CCDC88C/DAPLE (via GBA motif). Interacts (inactive GDP-bound form) with CCDC8A/GIV (via GBA motif). As to expression, ubiquitously expressed. Most abundant in the lung and in the spleen.

It localises to the cytoplasm. It is found in the cytoskeleton. Its subcellular location is the microtubule organizing center. The protein localises to the centrosome. The protein resides in the cell membrane. It localises to the membrane. Functionally, guanine nucleotide-binding proteins (G proteins) are involved as modulators or transducers in various transmembrane signaling systems. The G(i) proteins are involved in hormonal regulation of adenylate cyclase: they inhibit the cyclase in response to beta-adrenergic stimuli. May play a role in cell division. This is Guanine nucleotide-binding protein G(i) subunit alpha-2 (GNAI2) from Cavia porcellus (Guinea pig).